Here is a 422-residue protein sequence, read N- to C-terminus: Phosphoserine aminotransferase 2, chloroplastic (422 aa).

The transit peptide at 1 to 50 directs the protein to the chloroplast; that stretch reads MAASTNSFLIGNQTQIPSLKPKSISQSFIHFTKPNTINLTTRTKSVSIRC. Ala-51 bears the N-acetylalanine mark. Arg-101 is an L-glutamate binding site. Pyridoxal 5'-phosphate-binding positions include 135-136, Trp-161, Thr-211, Asp-233, and Gln-256; that span reads AT. The residue at position 257 (Lys-257) is an N6-(pyridoxal phosphate)lysine. 298–299 is a binding site for pyridoxal 5'-phosphate; it reads NT.

This sequence belongs to the class-V pyridoxal-phosphate-dependent aminotransferase family. SerC subfamily. It depends on pyridoxal 5'-phosphate as a cofactor.

The protein localises to the plastid. The protein resides in the chloroplast. It catalyses the reaction O-phospho-L-serine + 2-oxoglutarate = 3-phosphooxypyruvate + L-glutamate. The catalysed reaction is 4-(phosphooxy)-L-threonine + 2-oxoglutarate = (R)-3-hydroxy-2-oxo-4-phosphooxybutanoate + L-glutamate. It functions in the pathway amino-acid biosynthesis; L-serine biosynthesis; L-serine from 3-phospho-D-glycerate: step 2/3. Functionally, involved in the plastidial phosphorylated pathway of serine biosynthesis (PPSB). Catalyzes the reversible conversion of 3-phosphohydroxypyruvate to phosphoserine. This is Phosphoserine aminotransferase 2, chloroplastic (PSAT2) from Arabidopsis thaliana (Mouse-ear cress).